Consider the following 265-residue polypeptide: 5'-nucleotidase SurE (265 aa).

A divalent metal cation is bound by residues aspartate 8, aspartate 9, serine 39, and asparagine 96.

This sequence belongs to the SurE nucleotidase family. A divalent metal cation serves as cofactor.

The protein localises to the cytoplasm. It carries out the reaction a ribonucleoside 5'-phosphate + H2O = a ribonucleoside + phosphate. In terms of biological role, nucleotidase that shows phosphatase activity on nucleoside 5'-monophosphates. In Rubrobacter xylanophilus (strain DSM 9941 / JCM 11954 / NBRC 16129 / PRD-1), this protein is 5'-nucleotidase SurE.